Here is a 120-residue protein sequence, read N- to C-terminus: ATP-dependent Clp protease adapter protein ClpS (120 aa).

The protein belongs to the ClpS family. As to quaternary structure, binds to the N-terminal domain of the chaperone ClpA.

Functionally, involved in the modulation of the specificity of the ClpAP-mediated ATP-dependent protein degradation. The chain is ATP-dependent Clp protease adapter protein ClpS from Azotobacter vinelandii (strain DJ / ATCC BAA-1303).